We begin with the raw amino-acid sequence, 228 residues long: Mitochondrial assembly of ribosomal large subunit protein 1 (228 aa).

The tract at residues 53 to 77 is disordered; the sequence is SLTRGLHHGPQPEERTAGDARLQPG.

It belongs to the Iojap/RsfS family. As to quaternary structure, associates with the mitochondrial ribosome large subunit (39S) via interaction with MRPL12 and/or MRPL14. The interaction generates steric hindrance that is expected to prevent premature association of the 28S and 39S ribosomal subunits. Identified in a complex composed of MALSU1, MIEF1 upstream open reading frame protein and NDUFAB1; within the trimeric complex, MIEF1 upstream open reading frame protein functions as a bridging scaffold that interacts with MALSU1 on one side, and with NDUFAB1 on the other side. Interacts with MRPL12 and MRPL14.

The protein localises to the mitochondrion matrix. In terms of biological role, required for normal mitochondrial ribosome function and mitochondrial translation. May play a role in ribosome biogenesis by preventing premature association of the 28S and 39S ribosomal subunits. Interacts with mitochondrial ribosomal protein uL14m (MRPL14), probably blocking formation of intersubunit bridge B8, preventing association of the 28S and 39S ribosomal subunits. Addition to isolated mitochondrial ribosomal subunits partially inhibits translation, probably by interfering with the association of the 28S and 39S ribosomal subunits and the formation of functional ribosomes. May also participate in the assembly and/or regulation of the stability of the large subunit of the mitochondrial ribosome. May function as a ribosomal silencing factor. The chain is Mitochondrial assembly of ribosomal large subunit protein 1 (Malsu1) from Mus musculus (Mouse).